A 311-amino-acid chain; its full sequence is Methionyl-tRNA formyltransferase (311 aa).

110–113 (SLLP) contacts (6S)-5,6,7,8-tetrahydrofolate.

This sequence belongs to the Fmt family.

The catalysed reaction is L-methionyl-tRNA(fMet) + (6R)-10-formyltetrahydrofolate = N-formyl-L-methionyl-tRNA(fMet) + (6S)-5,6,7,8-tetrahydrofolate + H(+). Its function is as follows. Attaches a formyl group to the free amino group of methionyl-tRNA(fMet). The formyl group appears to play a dual role in the initiator identity of N-formylmethionyl-tRNA by promoting its recognition by IF2 and preventing the misappropriation of this tRNA by the elongation apparatus. The chain is Methionyl-tRNA formyltransferase from Streptococcus pneumoniae (strain P1031).